A 233-amino-acid polypeptide reads, in one-letter code: MTDMERRGRATEAFFGRRKGKALREQQAETLNSLLPAFLIDLSAAPPEPLTSLFPVPVERLRLEIGFGGGEHLIHRALETPSTGFIGVEPFVNSMQKLLSRIGETGASNIRVYNDDATQLLDWLPDGALDQIDLLYPDPWPKRKHWKRRFVSKTNLDRFHRVLKPGGLFCFASDIDTYVNWTLIKCRDHGGFEWIADNAADWLTPYEGWPSTRYEAKARREGRSSAYLTFRKV.

Residues glutamate 64, glutamate 89, aspartate 116, and aspartate 138 each coordinate S-adenosyl-L-methionine. Aspartate 138 is a catalytic residue. Residues lysine 142, aspartate 174, and 212–215 (TRYE) contribute to the substrate site.

This sequence belongs to the class I-like SAM-binding methyltransferase superfamily. TrmB family.

It carries out the reaction guanosine(46) in tRNA + S-adenosyl-L-methionine = N(7)-methylguanosine(46) in tRNA + S-adenosyl-L-homocysteine. The protein operates within tRNA modification; N(7)-methylguanine-tRNA biosynthesis. Catalyzes the formation of N(7)-methylguanine at position 46 (m7G46) in tRNA. In Rhizobium johnstonii (strain DSM 114642 / LMG 32736 / 3841) (Rhizobium leguminosarum bv. viciae), this protein is tRNA (guanine-N(7)-)-methyltransferase.